A 91-amino-acid chain; its full sequence is Protein LURE 1.3 (91 aa).

A signal peptide spans 1–20 (MKLPFIFLITLLIFVSSCTS). Residue Asn24 is glycosylated (N-linked (GlcNAc...) asparagine). 3 cysteine pairs are disulfide-bonded: Cys59–Cys76, Cys62–Cys83, and Cys66–Cys85. Positions 68–88 (RRGKYIRTCSFERKLCRCSIS) are PRK6 binding.

The protein belongs to the DEFL family. Binds to PRK6 LRRs. In terms of tissue distribution, expressed in the pistil. Detected exclusively in the synergid cells.

Its subcellular location is the secreted. In terms of biological role, pollen tube attractants guiding pollen tubes to the ovular micropyle. Attracts pollen tubes from both A.thaliana and A.lyrata. The chain is Protein LURE 1.3 from Arabidopsis thaliana (Mouse-ear cress).